The following is a 148-amino-acid chain: Phosphopantetheine adenylyltransferase (148 aa).

Belongs to the eukaryotic CoaD family.

The protein resides in the cytoplasm. It carries out the reaction (R)-4'-phosphopantetheine + ATP + H(+) = 3'-dephospho-CoA + diphosphate. Its pathway is cofactor biosynthesis; coenzyme A biosynthesis. Functionally, reversibly transfers an adenylyl group from ATP to 4'-phosphopantetheine, yielding dephospho-CoA (dPCoA) and pyrophosphate. In Archaeoglobus fulgidus (strain ATCC 49558 / DSM 4304 / JCM 9628 / NBRC 100126 / VC-16), this protein is Phosphopantetheine adenylyltransferase.